The sequence spans 256 residues: Acetyl-coenzyme A carboxylase carboxyl transferase subunit alpha (256 aa).

In terms of domain architecture, CoA carboxyltransferase C-terminal spans 1–236 (MTDVSRVLKE…KANLIEQITS (236 aa)).

Belongs to the AccA family. As to quaternary structure, acetyl-CoA carboxylase is a heterohexamer composed of biotin carboxyl carrier protein (AccB), biotin carboxylase (AccC) and two subunits each of ACCase subunit alpha (AccA) and ACCase subunit beta (AccD).

Its subcellular location is the cytoplasm. It carries out the reaction N(6)-carboxybiotinyl-L-lysyl-[protein] + acetyl-CoA = N(6)-biotinyl-L-lysyl-[protein] + malonyl-CoA. It participates in lipid metabolism; malonyl-CoA biosynthesis; malonyl-CoA from acetyl-CoA: step 1/1. Component of the acetyl coenzyme A carboxylase (ACC) complex. First, biotin carboxylase catalyzes the carboxylation of biotin on its carrier protein (BCCP) and then the CO(2) group is transferred by the carboxyltransferase to acetyl-CoA to form malonyl-CoA. The protein is Acetyl-coenzyme A carboxylase carboxyl transferase subunit alpha of Streptococcus pyogenes serotype M12 (strain MGAS2096).